We begin with the raw amino-acid sequence, 61 residues long: Large ribosomal subunit protein uL30 (61 aa).

The protein belongs to the universal ribosomal protein uL30 family. Part of the 50S ribosomal subunit.

The chain is Large ribosomal subunit protein uL30 from Dichelobacter nodosus (strain VCS1703A).